Reading from the N-terminus, the 294-residue chain is Chelated iron transport system membrane protein YfeC (294 aa).

Transmembrane regions (helical) follow at residues A17 to L37, V51 to F71, A93 to N113, I140 to F160, I169 to V189, T194 to L214, L221 to F241, and A246 to A266.

Belongs to the ABC-3 integral membrane protein family.

It is found in the cell inner membrane. In terms of biological role, part of an ATP-driven transport system YfeABC for chelated iron. This is Chelated iron transport system membrane protein YfeC (yfeC) from Yersinia pestis.